A 143-amino-acid chain; its full sequence is Hemoglobin cathodic subunit alpha (143 aa).

Residue serine 2 is modified to N-acetylserine. Residues 2–143 (SLTAKDKTLV…VSAALADKYR (142 aa)) form the Globin domain. Histidine 59 is a binding site for O2. Heme b is bound at residue histidine 89.

This sequence belongs to the globin family. Heterotetramer of two alpha chains and two beta chains. In terms of tissue distribution, red blood cells.

Its function is as follows. Involved in oxygen transport from the gills to the various peripheral tissues. The polypeptide is Hemoglobin cathodic subunit alpha (Conger conger (Conger eel)).